The primary structure comprises 234 residues: Thiamine-phosphate synthase (234 aa).

4-amino-2-methyl-5-(diphosphooxymethyl)pyrimidine is bound by residues 52 to 56 and Asn-84; that span reads QYRSK. Mg(2+)-binding residues include Asp-85 and Asp-104. Ser-123 serves as a coordination point for 4-amino-2-methyl-5-(diphosphooxymethyl)pyrimidine. 150–152 is a 2-[(2R,5Z)-2-carboxy-4-methylthiazol-5(2H)-ylidene]ethyl phosphate binding site; that stretch reads SVT. Lys-153 is a binding site for 4-amino-2-methyl-5-(diphosphooxymethyl)pyrimidine. Residue Gly-180 participates in 2-[(2R,5Z)-2-carboxy-4-methylthiazol-5(2H)-ylidene]ethyl phosphate binding.

This sequence belongs to the thiamine-phosphate synthase family. Mg(2+) is required as a cofactor.

The enzyme catalyses 2-[(2R,5Z)-2-carboxy-4-methylthiazol-5(2H)-ylidene]ethyl phosphate + 4-amino-2-methyl-5-(diphosphooxymethyl)pyrimidine + 2 H(+) = thiamine phosphate + CO2 + diphosphate. It carries out the reaction 2-(2-carboxy-4-methylthiazol-5-yl)ethyl phosphate + 4-amino-2-methyl-5-(diphosphooxymethyl)pyrimidine + 2 H(+) = thiamine phosphate + CO2 + diphosphate. The catalysed reaction is 4-methyl-5-(2-phosphooxyethyl)-thiazole + 4-amino-2-methyl-5-(diphosphooxymethyl)pyrimidine + H(+) = thiamine phosphate + diphosphate. Its pathway is cofactor biosynthesis; thiamine diphosphate biosynthesis; thiamine phosphate from 4-amino-2-methyl-5-diphosphomethylpyrimidine and 4-methyl-5-(2-phosphoethyl)-thiazole: step 1/1. Condenses 4-methyl-5-(beta-hydroxyethyl)thiazole monophosphate (THZ-P) and 2-methyl-4-amino-5-hydroxymethyl pyrimidine pyrophosphate (HMP-PP) to form thiamine monophosphate (TMP). This is Thiamine-phosphate synthase from Nitrosospira multiformis (strain ATCC 25196 / NCIMB 11849 / C 71).